Reading from the N-terminus, the 274-residue chain is Thiamine kinase (274 aa).

It belongs to the thiamine kinase family.

The catalysed reaction is thiamine + ATP = thiamine phosphate + ADP + H(+). It participates in cofactor biosynthesis; thiamine diphosphate biosynthesis; thiamine phosphate from thiamine: step 1/1. Catalyzes the ATP-dependent phosphorylation of thiamine to thiamine phosphate. Is involved in thiamine salvage. This Escherichia coli (strain SMS-3-5 / SECEC) protein is Thiamine kinase.